Reading from the N-terminus, the 429-residue chain is Protein arginine N-methyltransferase 2 (429 aa).

Disordered stretches follow at residues 41 to 76 and 137 to 180; these read PEVA…EDHE and ALDS…EETP. Positions 137–163 are enriched in acidic residues; the sequence is ALDSDDEDDEEMAEGEEAQAEDGEEAP. The span at 164-174 shows a compositional bias: low complexity; sequence ELVAAEEATQT. The RMT2 domain maps to 190–429; sequence LEEQVTSDKY…YRLPVCTFLG (240 aa). S-adenosyl-L-methionine is bound by residues Tyr199, Met228, 250–255, 271–273, 308–309, and Asp328; these read FGMGII, EAH, and WQ.

It belongs to the class I-like SAM-binding methyltransferase superfamily. RMT2 methyltransferase family. As to quaternary structure, monomer.

It localises to the cytoplasm. The protein localises to the nucleus. Its function is as follows. S-adenosyl-L-methionine-dependent protein-arginine N-methyltransferase that methylates the delta-nitrogen atom of arginine residues to form N5-methylarginine (type IV) in target proteins. Monomethylates ribosomal protein L12. This is Protein arginine N-methyltransferase 2 from Neurospora crassa (strain ATCC 24698 / 74-OR23-1A / CBS 708.71 / DSM 1257 / FGSC 987).